A 176-amino-acid polypeptide reads, in one-letter code: Inorganic pyrophosphatase (176 aa).

Lys-30, Arg-44, and Tyr-56 together coordinate substrate. Positions 66, 71, and 103 each coordinate Mg(2+). A substrate-binding site is contributed by Tyr-142.

It belongs to the PPase family. Homohexamer. It depends on Mg(2+) as a cofactor.

It localises to the cytoplasm. The catalysed reaction is diphosphate + H2O = 2 phosphate + H(+). Functionally, catalyzes the hydrolysis of inorganic pyrophosphate (PPi) forming two phosphate ions. The chain is Inorganic pyrophosphatase from Vibrio vulnificus (strain CMCP6).